Consider the following 269-residue polypeptide: JmjC domain-containing protein 8 (269 aa).

A signal peptide spans methionine 1–proline 24. Residues asparagine 135, asparagine 145, and asparagine 214 are each glycosylated (N-linked (GlcNAc...) asparagine). In terms of domain architecture, JmjC spans threonine 147–glycine 269.

In terms of assembly, oligomer. Dimer. Interacts with PKM; regulates angiogenesis and metabolism. N-glycosylated.

It localises to the endoplasmic reticulum lumen. The protein localises to the cytoplasm. Functionally, functions as a positive regulator of TNF-induced NF-kappaB signaling. Regulates angiogenesis and cellular metabolism through interaction with PKM. This is JmjC domain-containing protein 8 from Rattus norvegicus (Rat).